A 259-amino-acid polypeptide reads, in one-letter code: Large ribosomal subunit protein uL3c (259 aa).

The N-terminal 37 residues, Leu-1 to Ser-37, are a transit peptide targeting the chloroplast. Residues Met-176–Thr-211 are disordered. The segment covering Tyr-199 to Thr-211 has biased composition (basic residues).

The protein belongs to the universal ribosomal protein uL3 family. In terms of assembly, part of the 50S ribosomal subunit.

The protein localises to the plastid. The protein resides in the chloroplast. Its function is as follows. One of the primary rRNA binding proteins, it binds directly near the 3'-end of the 23S rRNA, where it nucleates assembly of the 50S subunit. The chain is Large ribosomal subunit protein uL3c (RPL3) from Nicotiana tabacum (Common tobacco).